Consider the following 110-residue polypeptide: MSLTEARFHDLVDATQQNIEDVFDESGLDVDLENSAGVLTVKFEGGSQLIFSRQEPLRQLWLAAKSGGFHFDYDEEESRWACDTSDELLSEMLARMTFEQAGADLDFSEI.

It belongs to the frataxin family.

Its function is as follows. Involved in iron-sulfur (Fe-S) cluster assembly. May act as a regulator of Fe-S biogenesis. This is Iron-sulfur cluster assembly protein CyaY from Pseudomonas syringae pv. tomato (strain ATCC BAA-871 / DC3000).